The chain runs to 357 residues: MTAQTGQTQSQDARIIISVDAMGGDEGPAAVIAGCDVSARKNPDVFFILHGPEAEITALVNRRKSLQGRCEVRDATGVVTMDDKPSQVVRNSKGTSMWSAIEAVRDGSASVAVSCGNTGALMALSMIRLRKLPGVNRPAIAVLYPSSNQQGFNVLLDVGADIKADADDLLRYALMGMSYARNGLDLPRPRVGLLNVGTEEHKGRTELKEAFDLIKEQQEPAGFDFVGFVEGGDISGDLCDVIVTDGFTGNVAIKTGEGTANLVGNRLREAFRYTPLSRLASLLAYPSLRRLKKKIDPRRVNGGVFLGLNGTVVKSHGAADATGVSSAIKLAAQLAHIQFTDKLAARVAGLPAEEKTQ.

Belongs to the PlsX family. As to quaternary structure, homodimer. Probably interacts with PlsY.

The protein resides in the cytoplasm. It carries out the reaction a fatty acyl-[ACP] + phosphate = an acyl phosphate + holo-[ACP]. Its pathway is lipid metabolism; phospholipid metabolism. In terms of biological role, catalyzes the reversible formation of acyl-phosphate (acyl-PO(4)) from acyl-[acyl-carrier-protein] (acyl-ACP). This enzyme utilizes acyl-ACP as fatty acyl donor, but not acyl-CoA. The protein is Phosphate acyltransferase of Roseobacter denitrificans (strain ATCC 33942 / OCh 114) (Erythrobacter sp. (strain OCh 114)).